The following is a 282-amino-acid chain: Shikimate dehydrogenase (NADP(+)) (282 aa).

Shikimate contacts are provided by residues 15–17 and Thr62; that span reads SKS. The active-site Proton acceptor is Lys66. Residues Asn87 and Asp103 each contribute to the shikimate site. Residues 127–131, 151–156, and Met220 each bind NADP(+); these read GAGGA and NRTHTK. Shikimate is bound at residue Tyr222. NADP(+) is bound at residue Gly244.

The protein belongs to the shikimate dehydrogenase family. Homodimer.

It carries out the reaction shikimate + NADP(+) = 3-dehydroshikimate + NADPH + H(+). The protein operates within metabolic intermediate biosynthesis; chorismate biosynthesis; chorismate from D-erythrose 4-phosphate and phosphoenolpyruvate: step 4/7. Functionally, involved in the biosynthesis of the chorismate, which leads to the biosynthesis of aromatic amino acids. Catalyzes the reversible NADPH linked reduction of 3-dehydroshikimate (DHSA) to yield shikimate (SA). This Shewanella baltica (strain OS155 / ATCC BAA-1091) protein is Shikimate dehydrogenase (NADP(+)).